The chain runs to 60 residues: UPF0509 protein ESA_01586 (60 aa).

Belongs to the UPF0509 family.

This is UPF0509 protein ESA_01586 from Cronobacter sakazakii (strain ATCC BAA-894) (Enterobacter sakazakii).